We begin with the raw amino-acid sequence, 77 residues long: Acyl carrier protein (77 aa).

The region spanning 2 to 77 (SDVAEKVKKI…DAIAYIEEKK (76 aa)) is the Carrier domain. The residue at position 37 (Ser37) is an O-(pantetheine 4'-phosphoryl)serine.

It belongs to the acyl carrier protein (ACP) family. Post-translationally, 4'-phosphopantetheine is transferred from CoA to a specific serine of apo-ACP by AcpS. This modification is essential for activity because fatty acids are bound in thioester linkage to the sulfhydryl of the prosthetic group.

The protein localises to the cytoplasm. The protein operates within lipid metabolism; fatty acid biosynthesis. In terms of biological role, carrier of the growing fatty acid chain in fatty acid biosynthesis. The chain is Acyl carrier protein from Desulfovibrio desulfuricans (strain ATCC 27774 / DSM 6949 / MB).